A 243-amino-acid polypeptide reads, in one-letter code: MHVSRIIAHIALATAITATTVSPTDAAWGWTVKSTDEVKADKRDLVASRGLRGLIGQASPNEVSPANVPVSGIPLLGDKQPSGYPMLPADSPSTGSSLLNDDLLQENPVPPANGLVHGVPLLSSNQPLQTPMLSGNGPITGYRFFSGNESPMLPANSPITGLPLLSGNIPSTFEGEQISNGDEYQQNVDEDKGQNFGHSVSGPPTTTLTGPHTKSGIPPFENLVAPAKGSMPNTRRNGYQFFE.

The N-terminal stretch at 1 to 26 (MHVSRIIAHIALATAITATTVSPTDA) is a signal peptide. A RxLR motif is present at residues 49–52 (RGLR). The interval 187–243 (NVDEDKGQNFGHSVSGPPTTTLTGPHTKSGIPPFENLVAPAKGSMPNTRRNGYQFFE) is disordered. The segment covering 199-216 (SVSGPPTTTLTGPHTKSG) has biased composition (low complexity).

This sequence belongs to the RxLR effector family.

The protein resides in the secreted. It localises to the host cytoplasm. Its subcellular location is the host nucleus. Effector that significantly enhances susceptibilities of grapevine and tobacco to pathogens. Acts as a broad suppressor of cell death to interrupt plant immunity. Completely inhibits cell death induced by cell death-inducing proteins, including the PAMP elicitor INF1 from P.infestans. Reduces the transcriptional levels of the defense-related genes and impairs the H(2)O(2) accumulation in N.benthamiana. This chain is Secreted RxLR effector protein 28, found in Plasmopara viticola (Downy mildew of grapevine).